Consider the following 120-residue polypeptide: ATP-dependent Clp protease adapter protein ClpS (120 aa).

The protein belongs to the ClpS family. Binds to the N-terminal domain of the chaperone ClpA.

Involved in the modulation of the specificity of the ClpAP-mediated ATP-dependent protein degradation. The protein is ATP-dependent Clp protease adapter protein ClpS of Azotobacter vinelandii (strain DJ / ATCC BAA-1303).